The following is a 76-amino-acid chain: Translational regulator CsrA (76 aa).

It belongs to the CsrA/RsmA family. As to quaternary structure, homodimer; the beta-strands of each monomer intercalate to form a hydrophobic core, while the alpha-helices form wings that extend away from the core.

Its subcellular location is the cytoplasm. Its function is as follows. A translational regulator that binds mRNA to regulate translation initiation and/or mRNA stability. Usually binds in the 5'-UTR at or near the Shine-Dalgarno sequence preventing ribosome-binding, thus repressing translation. Its main target seems to be the major flagellin gene, while its function is anatagonized by FliW. The polypeptide is Translational regulator CsrA (Helicobacter pylori (strain P12)).